The primary structure comprises 320 residues: GDP-L-fucose synthase (320 aa).

14-20 (GGSGLVG) serves as a coordination point for NADP(+). The Proton donor/acceptor role is filled by Tyr-142. NADP(+)-binding positions include Lys-146, 169 to 172 (PTNI), and His-185. Lys-193, Arg-214, and Asp-276 together coordinate substrate.

The protein belongs to the NAD(P)-dependent epimerase/dehydratase family. Fucose synthase subfamily.

The catalysed reaction is GDP-beta-L-fucose + NADP(+) = GDP-4-dehydro-alpha-D-rhamnose + NADPH + H(+). It functions in the pathway nucleotide-sugar biosynthesis; GDP-L-fucose biosynthesis via de novo pathway; GDP-L-fucose from GDP-alpha-D-mannose: step 2/2. In terms of biological role, catalyzes the two-step NADP-dependent conversion of GDP-4-dehydro-6-deoxy-D-mannose to GDP-fucose, involving an epimerase and a reductase reaction. The protein is GDP-L-fucose synthase (ger) of Dictyostelium discoideum (Social amoeba).